Reading from the N-terminus, the 251-residue chain is Large ribosomal subunit protein uL4 (251 aa).

It belongs to the universal ribosomal protein uL4 family. Part of the 50S ribosomal subunit.

One of the primary rRNA binding proteins, this protein initially binds near the 5'-end of the 23S rRNA. It is important during the early stages of 50S assembly. It makes multiple contacts with different domains of the 23S rRNA in the assembled 50S subunit and ribosome. Its function is as follows. Forms part of the polypeptide exit tunnel. This Methanothrix thermoacetophila (strain DSM 6194 / JCM 14653 / NBRC 101360 / PT) (Methanosaeta thermophila) protein is Large ribosomal subunit protein uL4.